A 375-amino-acid polypeptide reads, in one-letter code: MEEKELKNGYTTGTCATAAVKVALEALIYGKKATEVDITTLNYTNLKIPVQKLRVRNNFASCAIQKYAGDDPDVTNGISICAKVQLVKELPKVDRGAYYDNCVIIGGRGVGFVTKKGLQIAVGKSAINPGPQKMITSVVNEILDGSDEKVIITIYVPEGRAKALKTYNPKMGVIGGISVLGTTGIVKAMSEDALKKSMFAELKVMREDKNRDWIIFAFGNYGERHCQKIGLDTEQLIIISNFVGFMIEAAVKLEFKKIIMLGHIAKAIKVAGGIFNTHSRVADGRMETMAACAFLVDEKPEIIRKILASNTIEEACDYIEKKEIYHLIANRVAFKMQEYARADIEVSAAIFSFKGETIGESDNYQRMVGECGAIK.

It belongs to the CbiD family.

It catalyses the reaction Co-precorrin-5B + S-adenosyl-L-methionine = Co-precorrin-6A + S-adenosyl-L-homocysteine. The protein operates within cofactor biosynthesis; adenosylcobalamin biosynthesis; cob(II)yrinate a,c-diamide from sirohydrochlorin (anaerobic route): step 6/10. In terms of biological role, catalyzes the methylation of C-1 in cobalt-precorrin-5B to form cobalt-precorrin-6A. The protein is Cobalt-precorrin-5B C(1)-methyltransferase of Fusobacterium nucleatum subsp. nucleatum (strain ATCC 25586 / DSM 15643 / BCRC 10681 / CIP 101130 / JCM 8532 / KCTC 2640 / LMG 13131 / VPI 4355).